Here is a 174-residue protein sequence, read N- to C-terminus: Shikimate kinase (174 aa).

An ATP-binding site is contributed by 15-20 (GTGKST). Ser19 contacts Mg(2+). Positions 37, 61, and 82 each coordinate substrate. Arg120 contacts ATP. Arg138 provides a ligand contact to substrate.

The protein belongs to the shikimate kinase family. As to quaternary structure, monomer. The cofactor is Mg(2+).

It localises to the cytoplasm. The catalysed reaction is shikimate + ATP = 3-phosphoshikimate + ADP + H(+). The protein operates within metabolic intermediate biosynthesis; chorismate biosynthesis; chorismate from D-erythrose 4-phosphate and phosphoenolpyruvate: step 5/7. Functionally, catalyzes the specific phosphorylation of the 3-hydroxyl group of shikimic acid using ATP as a cosubstrate. The sequence is that of Shikimate kinase from Staphylococcus aureus (strain MRSA252).